Consider the following 122-residue polypeptide: NADH-quinone oxidoreductase subunit A (122 aa).

A run of 3 helical transmembrane segments spans residues 10–30, 66–86, and 91–111; these read MIVLIFLLLGILLPVVALTLG, IFALLFVIFDVETLFLYPWAV, and LGLFALIEMLIFVVMLLVGLA.

The protein belongs to the complex I subunit 3 family. NDH-1 is composed of 14 different subunits. Subunits NuoA, H, J, K, L, M, N constitute the membrane sector of the complex.

It is found in the cell membrane. It catalyses the reaction a quinone + NADH + 5 H(+)(in) = a quinol + NAD(+) + 4 H(+)(out). In terms of biological role, NDH-1 shuttles electrons from NADH, via FMN and iron-sulfur (Fe-S) centers, to quinones in the respiratory chain. The immediate electron acceptor for the enzyme in this species is believed to be a menaquinone. Couples the redox reaction to proton translocation (for every two electrons transferred, four hydrogen ions are translocated across the cytoplasmic membrane), and thus conserves the redox energy in a proton gradient. The chain is NADH-quinone oxidoreductase subunit A from Bacillus anthracis.